We begin with the raw amino-acid sequence, 366 residues long: Uroporphyrinogen decarboxylase (366 aa).

Substrate-binding positions include 28–32, Asp78, Tyr160, Thr215, and His333; that span reads RQAGR.

The protein belongs to the uroporphyrinogen decarboxylase family. In terms of assembly, homodimer.

It is found in the cytoplasm. The enzyme catalyses uroporphyrinogen III + 4 H(+) = coproporphyrinogen III + 4 CO2. The protein operates within porphyrin-containing compound metabolism; protoporphyrin-IX biosynthesis; coproporphyrinogen-III from 5-aminolevulinate: step 4/4. Catalyzes the decarboxylation of four acetate groups of uroporphyrinogen-III to yield coproporphyrinogen-III. This chain is Uroporphyrinogen decarboxylase, found in Paraburkholderia xenovorans (strain LB400).